Here is a 421-residue protein sequence, read N- to C-terminus: Outer capsid protein P8 (421 aa).

The protein belongs to the phytoreovirus outer capsid protein P8 family. Homotrimer. Homomultimer. Interacts with host peroxisomal glycolate oxidase (GOX). This interaction mediates its relocation to virus factories peripheral to host peroxisomes.

Its subcellular location is the virion. The protein resides in the host cytoplasm. In terms of biological role, capsid protein which self-assembles to form the outer icosahedral capsid with a T=13 symmetry, about 70 nm in diameter and consisting of 780 molecules capsid proteins. This chain is Outer capsid protein P8, found in Alopecurus aequalis (Barnyard grass).